Reading from the N-terminus, the 276-residue chain is NAD kinase (276 aa).

The active-site Proton acceptor is the Asp-61. Residues 61-62 (DG), 134-135 (ND), Arg-145, Lys-162, Asp-164, Val-172, 175-180 (TAYSFS), and Gln-234 each bind NAD(+).

The protein belongs to the NAD kinase family. The cofactor is a divalent metal cation.

It localises to the cytoplasm. It catalyses the reaction NAD(+) + ATP = ADP + NADP(+) + H(+). Functionally, involved in the regulation of the intracellular balance of NAD and NADP, and is a key enzyme in the biosynthesis of NADP. Catalyzes specifically the phosphorylation on 2'-hydroxyl of the adenosine moiety of NAD to yield NADP. The sequence is that of NAD kinase from Clostridium perfringens (strain 13 / Type A).